Here is a 70-residue protein sequence, read N- to C-terminus: Large ribosomal subunit protein bL31 (70 aa).

Residues cysteine 17, cysteine 19, cysteine 37, and cysteine 40 each contribute to the Zn(2+) site.

This sequence belongs to the bacterial ribosomal protein bL31 family. Type A subfamily. As to quaternary structure, part of the 50S ribosomal subunit. Zn(2+) serves as cofactor.

Binds the 23S rRNA. The protein is Large ribosomal subunit protein bL31 of Clostridium kluyveri (strain NBRC 12016).